The sequence spans 465 residues: ATP synthase subunit beta (465 aa).

An ATP-binding site is contributed by 148–155; it reads GGAGVGKT.

Belongs to the ATPase alpha/beta chains family. F-type ATPases have 2 components, CF(1) - the catalytic core - and CF(0) - the membrane proton channel. CF(1) has five subunits: alpha(3), beta(3), gamma(1), delta(1), epsilon(1). CF(0) has three main subunits: a(1), b(2) and c(9-12). The alpha and beta chains form an alternating ring which encloses part of the gamma chain. CF(1) is attached to CF(0) by a central stalk formed by the gamma and epsilon chains, while a peripheral stalk is formed by the delta and b chains.

It is found in the cell inner membrane. The enzyme catalyses ATP + H2O + 4 H(+)(in) = ADP + phosphate + 5 H(+)(out). Functionally, produces ATP from ADP in the presence of a proton gradient across the membrane. The catalytic sites are hosted primarily by the beta subunits. This is ATP synthase subunit beta from Neisseria meningitidis serogroup A / serotype 4A (strain DSM 15465 / Z2491).